We begin with the raw amino-acid sequence, 109 residues long: MFGKGGLGNLMKQAQQMQEKMQKMQEEIAQLEVTGESGAGLIKVTINGAHNCRRVEIDPSLLEDDKEMLEDLVAAAFNDAARRIEETQKEKMASVSSGMQLPPGFKMPF.

It belongs to the YbaB/EbfC family. In terms of assembly, homodimer.

It localises to the cytoplasm. It is found in the nucleoid. Functionally, binds to DNA and alters its conformation. May be involved in regulation of gene expression, nucleoid organization and DNA protection. This Escherichia coli O8 (strain IAI1) protein is Nucleoid-associated protein YbaB.